Here is a 122-residue protein sequence, read N- to C-terminus: UPF0102 protein MUL_2060 (122 aa).

It belongs to the UPF0102 family.

The polypeptide is UPF0102 protein MUL_2060 (Mycobacterium ulcerans (strain Agy99)).